We begin with the raw amino-acid sequence, 806 residues long: Leucine--tRNA ligase (806 aa).

The 'HIGH' region motif lies at 40–51 (PYPSGSGLHVGH). The 'KMSKS' region signature appears at 576 to 580 (KMSKS). Lys-579 provides a ligand contact to ATP.

It belongs to the class-I aminoacyl-tRNA synthetase family.

Its subcellular location is the cytoplasm. The catalysed reaction is tRNA(Leu) + L-leucine + ATP = L-leucyl-tRNA(Leu) + AMP + diphosphate. This Chlorobium phaeobacteroides (strain BS1) protein is Leucine--tRNA ligase.